The sequence spans 361 residues: Nicotinate-nucleotide--dimethylbenzimidazole phosphoribosyltransferase (361 aa).

Glutamate 315 functions as the Proton acceptor in the catalytic mechanism.

Belongs to the CobT family.

It carries out the reaction 5,6-dimethylbenzimidazole + nicotinate beta-D-ribonucleotide = alpha-ribazole 5'-phosphate + nicotinate + H(+). Its pathway is nucleoside biosynthesis; alpha-ribazole biosynthesis; alpha-ribazole from 5,6-dimethylbenzimidazole: step 1/2. Functionally, catalyzes the synthesis of alpha-ribazole-5'-phosphate from nicotinate mononucleotide (NAMN) and 5,6-dimethylbenzimidazole (DMB). The chain is Nicotinate-nucleotide--dimethylbenzimidazole phosphoribosyltransferase from Clostridium perfringens (strain ATCC 13124 / DSM 756 / JCM 1290 / NCIMB 6125 / NCTC 8237 / Type A).